The following is a 228-amino-acid chain: MKTCLQLARLLQLASPTLPVGAYTYSQGLEWAVESGVIRDEASAGRWIADLMHHGIGCYEAPMVAALMTAWSAGDVDEIECLNAEFLASRESAELRAETVQMGFSMRRLLRDLRDDTLAAVATLVETQAEVAFPTVWSGIAAAWQIEPEAAVTAYLWSWAENQVMAALKAVPLGQASGQRLLAELGSRIPEAAANANTLPKSRWSNFTPAFAIACARHETQYSRLFRS.

This sequence belongs to the UreF family. As to quaternary structure, ureD, UreF and UreG form a complex that acts as a GTP-hydrolysis-dependent molecular chaperone, activating the urease apoprotein by helping to assemble the nickel containing metallocenter of UreC. The UreE protein probably delivers the nickel.

The protein localises to the cytoplasm. Required for maturation of urease via the functional incorporation of the urease nickel metallocenter. This Dechloromonas aromatica (strain RCB) protein is Urease accessory protein UreF.